A 271-amino-acid polypeptide reads, in one-letter code: MRFSVLLTGLAAAGSIATAERTCGAVPPRAYEKEFTEALNSLSPEAASADLTAGITIDTYLHVLTSGQTGNIPDSQLQAQINAMNQHYSQAGVQFKLVKATRTDNANWASGRDEAGMKKALHMGTYSSLNIYFIPNLSSGLLGICYFPRANPSQTTIIMDGCMVRSGTVPGGETTNYNQGKTATHEVGHFLGLYHVFSENGSCVDADMVADTPAQSKKTSGCPSSQDSCPGGGVDSIHNYMDYSYDVCMNQFTPGQANRIAQSWRAFRAGH.

The first 19 residues, 1-19 (MRFSVLLTGLAAAGSIATA), serve as a signal peptide directing secretion. An N-linked (GlcNAc...) asparagine glycan is attached at N136. H185 serves as a coordination point for Zn(2+). The active site involves E186. H189 is a Zn(2+) binding site. N200 is a glycosylation site (N-linked (GlcNAc...) asparagine). A disulfide bridge connects residues C222 and C248.

Belongs to the peptidase M43B family.

The protein localises to the secreted. In terms of biological role, secreted metalloproteinase that allows assimilation of proteinaceous substrates. Plays a pivotal role as a pathogenicity determinant during infections and contributes to the ability of the pathogen to persist within the mammalian host. The sequence is that of Extracellular metalloprotease ARB_05317 from Arthroderma benhamiae (strain ATCC MYA-4681 / CBS 112371) (Trichophyton mentagrophytes).